Consider the following 278-residue polypeptide: Orotidine 5'-phosphate decarboxylase (278 aa).

The active-site Proton donor is the K95.

It belongs to the OMP decarboxylase family. Type 2 subfamily.

The catalysed reaction is orotidine 5'-phosphate + H(+) = UMP + CO2. The protein operates within pyrimidine metabolism; UMP biosynthesis via de novo pathway; UMP from orotate: step 2/2. This is Orotidine 5'-phosphate decarboxylase from Mycobacterium marinum (strain ATCC BAA-535 / M).